A 235-amino-acid polypeptide reads, in one-letter code: AA9 family lytic polysaccharide monooxygenase D (235 aa).

A signal peptide spans 1–18; it reads MKAFFAVLAVVSAPFVLG. H19 lines the Cu(2+) pocket. O-linked (Man...) serine glycosylation is present at S29. C61 and C181 form a disulfide bridge. H94 is a Cu(2+) binding site. Residues H167 and Q176 each contribute to the O2 site. Residue Y178 participates in Cu(2+) binding. An N-linked (GlcNAc...) asparagine glycan is attached at N221.

This sequence belongs to the polysaccharide monooxygenase AA9 family. It depends on Cu(2+) as a cofactor.

It localises to the secreted. The catalysed reaction is [(1-&gt;4)-beta-D-glucosyl]n+m + reduced acceptor + O2 = 4-dehydro-beta-D-glucosyl-[(1-&gt;4)-beta-D-glucosyl]n-1 + [(1-&gt;4)-beta-D-glucosyl]m + acceptor + H2O.. In terms of biological role, lytic polysaccharide monooxygenase (LPMO) that depolymerizes crystalline and amorphous polysaccharides via the oxidation of scissile alpha- or beta-(1-4)-glycosidic bonds, yielding only C1 oxidation products. Catalysis by LPMOs requires the reduction of the active-site copper from Cu(II) to Cu(I) by a reducing agent and H(2)O(2) or O(2) as a cosubstrate. This Phanerodontia chrysosporium (White-rot fungus) protein is AA9 family lytic polysaccharide monooxygenase D.